Reading from the N-terminus, the 167-residue chain is cAMP-dependent protein kinase type I-alpha regulatory subunit (167 aa).

Residue Thr12 is modified to Phosphothreonine. 2 positions are modified to phosphoserine: Ser14 and Ser20. The short motif at 30-33 is the Pseudophosphorylation motif element; it reads RGAI. Ser34 is subject to Phosphoserine. Residues 51 to 78, 79 to 167, Glu147, and Arg156 contribute to the 3',5'-cyclic AMP site; these read LFSH…SKVS and ILES…ILKR. The residue at position 82 (Ser82) is a Phosphoserine.

Belongs to the cAMP-dependent kinase regulatory chain family. The inactive holoenzyme is composed of two regulatory chains and two catalytic chains. Activation by cAMP releases the two active catalytic monomers and the regulatory dimer. Interacts with PRKACA and PRKACB. PRKAR1A also interacts with RFC2; the complex may be involved in cell survival. Interacts with AKAP4. Interacts with RARA; the interaction occurs in the presence of cAMP or FSH and regulates RARA transcriptional activity. Interacts with the phosphorylated form of PJA2. Interacts with CBFA2T3. Interacts with PRKX; regulates this cAMP-dependent protein kinase. Interacts with smAKAP; this interaction may target PRKAR1A to the plasma membrane. Interacts with AICDA. The pseudophosphorylation site binds to the substrate-binding region of the catalytic chain, resulting in the inhibition of its activity.

Its subcellular location is the cell membrane. Its function is as follows. Regulatory subunit of the cAMP-dependent protein kinases involved in cAMP signaling in cells. In Mesocricetus auratus (Golden hamster), this protein is cAMP-dependent protein kinase type I-alpha regulatory subunit.